A 119-amino-acid polypeptide reads, in one-letter code: Fluoride-specific ion channel FluC (119 aa).

4 consecutive transmembrane segments (helical) span residues isoleucine 5–alanine 25, threonine 34–isoleucine 54, tryptophan 59–leucine 79, and isoleucine 97–alanine 117. Na(+)-binding residues include glycine 69 and threonine 72.

Belongs to the fluoride channel Fluc/FEX (TC 1.A.43) family.

It is found in the cell inner membrane. The catalysed reaction is fluoride(in) = fluoride(out). Its activity is regulated as follows. Na(+) is not transported, but it plays an essential structural role and its presence is essential for fluoride channel function. Functionally, fluoride-specific ion channel. Important for reducing fluoride concentration in the cell, thus reducing its toxicity. The protein is Fluoride-specific ion channel FluC of Neisseria meningitidis serogroup C / serotype 2a (strain ATCC 700532 / DSM 15464 / FAM18).